The sequence spans 176 residues: Sigma intracellular receptor 2 (176 aa).

Residues 1–9 (MGALAARRC) lie on the Cytoplasmic side of the membrane. The chain crosses the membrane as a helical span at residues 10 to 30 (VEWLLGLYFVSHIPITLFIDL). Residues 10 to 158 (VEWLLGLYFV…PYLIIPLILL (149 aa)) form the EXPERA domain. The Lumenal portion of the chain corresponds to 31–68 (QAVLPPELYPQEFSNLLRWYSKEFKDPLMQEPPVWFKS). A helical transmembrane segment spans residues 69–89 (FLLCELVFQLPFFPIAAYAFF). Residues valine 75 and glutamine 77 each contribute to the cholesterol site. Residues 90–99 (KGSCRWIRIP) are Cytoplasmic-facing. The helical transmembrane segment at 100–120 (AIIYAAHTITTLIPILYTLLF) threads the bilayer. Residues 121–140 (EDFSKAVAFKGQRPESFRER) are Lumenal-facing. The chain crosses the membrane as a helical span at residues 141–161 (LTLVGVYAPYLIIPLILLLFM). Residues 162 to 176 (LRNPYYKYEEKRKKK) lie on the Cytoplasmic side of the membrane. An ER retention motif motif is present at residues 172–176 (KRKKK).

It belongs to the TMEM97/sigma-2 receptor family. In terms of assembly, homodimer. Interacts with NPC1; the interaction impairs NPC1-mediated cholesterol transport. Interacts with PGRMC1 and LDLR; the interaction increases LDL internalization. Interacts with histatin 1/HTN1; the interaction induces HTN1-stimulating wound healing. Interacts with TSPO.

The protein localises to the rough endoplasmic reticulum membrane. It localises to the nucleus membrane. Sigma-2 receptor which contributes to ameliorate dysfunctional cellular processes and slow degenerative progression by regulating cell functions including cholesterol biosynthesis/trafficking, membrane trafficking, autophagy, lipid membrane-bound protein trafficking, and receptor stabilization at the cell surface. Forms a ternary complex with PGRMC1 receptor and low density lipoprotein receptor/LDLR at the plasma membrane, which increases LDLR-mediated LDL cholesterol internalization. Decreases lysosomal sterol transporter NPC1 availability to the cell, probably through NPC1-binding, hence controlling lipid transport, including cholesterol and LBPA, outside of late endosome/lysosome. Binds regio- and stereoselective ligand 20(S)-hydroxycholesterol (20(S)-OHC) which enhances TMEM97-NPC1 interaction and decreases TMEM97-PGRMC1 and TMEM97-TSPO interactions, thereby linking OHC binding to cholesterol homeostasis. Also able to bind cholesterol. Binds histatin 1 (Hst 1)/HN1 salivary peptide at the ER membrane, which is critical for increasing mitochondria-ER contacts and stimulating Hst1 wound healing properties. May alter the activity of some cytochrome P450 proteins. Although shows homologies with sterol isomerases (EXPERA domain), not able to catalyze sterol isomerization. However, may act as sensors of these molecules. Acts as a quality control factor in the ER, promoting the proteolytic degradation of nonproductive and extramitochondrial precursor proteins in the ER membrane thus removing them from the ER surface. The chain is Sigma intracellular receptor 2 from Mus musculus (Mouse).